A 382-amino-acid chain; its full sequence is Alkane 1-monooxygenase 1 (382 aa).

4 consecutive transmembrane segments (helical) span residues 10-30 (MLAI…SMPF), 43-63 (FWAF…DMLF), 90-110 (LATV…FVAF), and 121-141 (WILS…HELI). H138 and H142 together coordinate Fe cation. Residues 146-166 (ALEQAAGGILLAAVCYAGFKV) form a helical membrane-spanning segment. 3 residues coordinate Fe cation: H168, H172, and H173. Residues 236-256 (LALLVGFGWAFGWLGMVFFLG) form a helical membrane-spanning segment. The Fe cation site is built by H312, H315, and H316.

It belongs to the fatty acid desaturase type 1 family. AlkB subfamily. The cofactor is Fe(3+).

Its subcellular location is the cell inner membrane. The enzyme catalyses octane + 2 reduced [rubredoxin] + O2 + 2 H(+) = 2 oxidized [rubredoxin] + octan-1-ol + H2O. Its pathway is hydrocarbon metabolism; alkane degradation. In terms of biological role, catalyzes the hydroxylation of n-alkanes in the presence of a NADH-rubredoxin reductase and rubredoxin. It preferably hydroxylases C16-C24 hydrocarbons. The polypeptide is Alkane 1-monooxygenase 1 (alkB1) (Pseudomonas aeruginosa (strain ATCC 15692 / DSM 22644 / CIP 104116 / JCM 14847 / LMG 12228 / 1C / PRS 101 / PAO1)).